A 608-amino-acid polypeptide reads, in one-letter code: Alpha-glycerophosphate oxidase (608 aa).

21 to 49 (DLLIIGGGITGAGVALQAAASGLETGLIE) is an FAD binding site. The disordered stretch occupies residues 393-418 (SAVSKLESSTSEKHLDPSAVSRGSSL).

The protein belongs to the FAD-dependent glycerol-3-phosphate dehydrogenase family. It depends on FAD as a cofactor.

Its subcellular location is the cell membrane. The enzyme catalyses sn-glycerol 3-phosphate + O2 = dihydroxyacetone phosphate + H2O2. Its pathway is membrane lipid metabolism; glycerophospholipid metabolism. In Streptococcus pneumoniae serotype 4 (strain ATCC BAA-334 / TIGR4), this protein is Alpha-glycerophosphate oxidase (glpO).